Reading from the N-terminus, the 85-residue chain is UPF0297 protein CHY_0540 (85 aa).

It belongs to the UPF0297 family.

This chain is UPF0297 protein CHY_0540, found in Carboxydothermus hydrogenoformans (strain ATCC BAA-161 / DSM 6008 / Z-2901).